The following is a 241-amino-acid chain: 2-C-methyl-D-erythritol 4-phosphate cytidylyltransferase (241 aa).

It belongs to the IspD/TarI cytidylyltransferase family. IspD subfamily. Homodimer.

It carries out the reaction 2-C-methyl-D-erythritol 4-phosphate + CTP + H(+) = 4-CDP-2-C-methyl-D-erythritol + diphosphate. It participates in isoprenoid biosynthesis; isopentenyl diphosphate biosynthesis via DXP pathway; isopentenyl diphosphate from 1-deoxy-D-xylulose 5-phosphate: step 2/6. In terms of biological role, catalyzes the formation of 4-diphosphocytidyl-2-C-methyl-D-erythritol from CTP and 2-C-methyl-D-erythritol 4-phosphate (MEP). This is 2-C-methyl-D-erythritol 4-phosphate cytidylyltransferase from Yersinia pseudotuberculosis serotype IB (strain PB1/+).